We begin with the raw amino-acid sequence, 295 residues long: Sperm acrosome membrane-associated protein 1 (295 aa).

The N-terminal stretch at 1-29 is a signal peptide; the sequence is MSPGGAGCSAGLLLTVGWLLLAGLQSTCG. Topologically, residues 30-220 are extracellular; the sequence is INVTAVQDPS…SRPDTDAVLV (191 aa). The disordered stretch occupies residues 39 to 71; sequence SLVSEGENEGEEEAENDSEVENEPQAEAEQDVS. Residues 44–68 show a composition bias toward acidic residues; the sequence is GENEGEEEAENDSEVENEPQAEAEQ. N-linked (GlcNAc...) asparagine glycosylation occurs at Asn-72. A helical membrane pass occupies residues 221–241; sequence FVLTIGVIICIFVIFVLIFII. The Cytoplasmic segment spans residues 242–295; that stretch reads VNWATVKDFWASKASTTEIQSELSSMKYKDSTSLDQSPTEIPGHEDDALSEWNE. Ser-256 carries the phosphoserine modification. The segment at 263–295 is disordered; the sequence is ELSSMKYKDSTSLDQSPTEIPGHEDDALSEWNE. At Tyr-269 the chain carries Phosphotyrosine. 2 positions are modified to phosphoserine: Ser-278 and Ser-291.

As to quaternary structure, interacts with CYLC1; the interaction may be relevant for proper acrosome attachment to the nuclear envelope. N-glycosylated. Detected in spermatozoa (at protein level).

It localises to the cytoplasmic vesicle. The protein localises to the secretory vesicle. It is found in the acrosome inner membrane. Plays a role in acrosome expansion and establishment of normal sperm morphology during spermatogenesis. Important for male fertility. The polypeptide is Sperm acrosome membrane-associated protein 1 (Sus scrofa (Pig)).